The following is a 76-amino-acid chain: Exodeoxyribonuclease 7 small subunit (76 aa).

It belongs to the XseB family. Heterooligomer composed of large and small subunits.

The protein resides in the cytoplasm. It carries out the reaction Exonucleolytic cleavage in either 5'- to 3'- or 3'- to 5'-direction to yield nucleoside 5'-phosphates.. Its function is as follows. Bidirectionally degrades single-stranded DNA into large acid-insoluble oligonucleotides, which are then degraded further into small acid-soluble oligonucleotides. The polypeptide is Exodeoxyribonuclease 7 small subunit (Bacillus cereus (strain G9842)).